Consider the following 410-residue polypeptide: Metacaspase-1B (410 aa).

Residues 1-106 form a disordered region; that stretch reads MYHRNSAPPP…SFGKGAPSNY (106 aa). Pro residues-rich tracts occupy residues 7 to 23 and 32 to 52; these read APPP…PQSQ and PPYP…PPPT. Active-site residues include H201 and C257.

The protein belongs to the peptidase C14B family.

In terms of biological role, involved in cell death (apoptosis). This Aspergillus clavatus (strain ATCC 1007 / CBS 513.65 / DSM 816 / NCTC 3887 / NRRL 1 / QM 1276 / 107) protein is Metacaspase-1B (casB).